Here is a 758-residue protein sequence, read N- to C-terminus: MRKQGVSSKRLQSSGRSQSKGRRGASLAREPEVEEEMEKSALGGGKLPRGSWRSSPGRIQSLKERKGLELEVVAKTFLLGPFQFVRNSLAQLREKVQELQARRFSSRTTLGIAVFVAILHWLHLVTLFENDRHFSHLSSLEREMTFRTEMGLYYSYFKTIIEAPSFLEGLWMIMNDRLTEYPLIINAIKRFHLYPEVIIASWYCTFMGIMNLFGLETKTCWNVTRIEPLNEVQSCEGLGDPACFYVGVIFILNGLMMGLFFMYGAYLSGTQLGGLITVLCFFFNHGEATRVMWTPPLRESFSYPFLVLQMCILTLILRTSSNDRRPFIALCLSNVAFMLPWQFAQFILFTQIASLFPMYVVGYIEPSKFQKIIYMNMISVTLSFILMFGNSMYLSSYYSSSLLMTWAIILKRNEIQKLGVSKLNFWLIQGSAWWCGTIILKFLTSKILGVSDHIRLSDLIAARILRYTDFDTLIYTCAPEFDFMEKATPLRYTKTLLLPVVMVITCFIFKKTVRDISYVLATNIYLRKQLLEHSELAFHTLQLLVFTALAILIMRLKMFLTPHMCVMASLICSRQLFGWLFRRVRFEKVIFGILTVMSIQGYANLRNQWSIIGEFNNLPQEELLQWIKYSTTSDAVFAGAMPTMASIKLSTLHPIVNHPHYEDADLRARTKIVYSTYSRKSAKEVRDKLLELHVNYYVLEEAWCVVRTKPGCSMLEIWDVEDPSNAANPPLCSVLLEDARPYFTTVFQNSVYRVLKVN.

The disordered stretch occupies residues 1 to 58 (MRKQGVSSKRLQSSGRSQSKGRRGASLAREPEVEEEMEKSALGGGKLPRGSWRSSPGR). At 1–107 (MRKQGVSSKR…ELQARRFSSR (107 aa)) the chain is on the nuclear side. A compositionally biased stretch (low complexity) spans 7–18 (SSKRLQSSGRSQ). The helical transmembrane segment at 108-128 (TTLGIAVFVAILHWLHLVTLF) threads the bilayer. The Perinuclear space portion of the chain corresponds to 129-194 (ENDRHFSHLS…INAIKRFHLY (66 aa)). The helical transmembrane segment at 195-215 (PEVIIASWYCTFMGIMNLFGL) threads the bilayer. The Nuclear segment spans residues 216–241 (ETKTCWNVTRIEPLNEVQSCEGLGDP). A run of 2 helical transmembrane segments spans residues 242-262 (ACFY…LFFM) and 263-283 (YGAY…CFFF). Over 284-296 (NHGEATRVMWTPP) the chain is Nuclear. The helical transmembrane segment at 297 to 317 (LRESFSYPFLVLQMCILTLIL) threads the bilayer. Residues 318 to 343 (RTSSNDRRPFIALCLSNVAFMLPWQF) lie on the Perinuclear space side of the membrane. A helical membrane pass occupies residues 344-364 (AQFILFTQIASLFPMYVVGYI). At 365–371 (EPSKFQK) the chain is on the nuclear side. Residues 372–392 (IIYMNMISVTLSFILMFGNSM) traverse the membrane as a helical segment. The Perinuclear space portion of the chain corresponds to 393–422 (YLSSYYSSSLLMTWAIILKRNEIQKLGVSK). A helical transmembrane segment spans residues 423–443 (LNFWLIQGSAWWCGTIILKFL). Topologically, residues 444-488 (TSKILGVSDHIRLSDLIAARILRYTDFDTLIYTCAPEFDFMEKAT) are nuclear. A helical membrane pass occupies residues 489–509 (PLRYTKTLLLPVVMVITCFIF). The Perinuclear space portion of the chain corresponds to 510-533 (KKTVRDISYVLATNIYLRKQLLEH). A helical transmembrane segment spans residues 534-554 (SELAFHTLQLLVFTALAILIM). The Nuclear portion of the chain corresponds to 555–758 (RLKMFLTPHM…NSVYRVLKVN (204 aa)).

The protein belongs to the dpy-19 family. Interacts with FAM209. Widely expressed with high expression in testis. Not detectable in ejaculated sperm (at protein level).

The protein resides in the nucleus inner membrane. Its function is as follows. Probable C-mannosyltransferase that mediates C-mannosylation of tryptophan residues on target proteins. Required during spermatogenesis for sperm head elongation and acrosome formation. Also plays a role in acrosome attachment to the nuclear envelope. The polypeptide is Probable C-mannosyltransferase DPY19L2 (Homo sapiens (Human)).